The following is a 464-amino-acid chain: Soluble pyridine nucleotide transhydrogenase (464 aa).

35–44 (EASSQVGGSC) contributes to the FAD binding site.

Belongs to the class-I pyridine nucleotide-disulfide oxidoreductase family. The cofactor is FAD.

Its subcellular location is the cytoplasm. It catalyses the reaction NAD(+) + NADPH = NADH + NADP(+). Conversion of NADPH, generated by peripheral catabolic pathways, to NADH, which can enter the respiratory chain for energy generation. The protein is Soluble pyridine nucleotide transhydrogenase of Marinomonas sp. (strain MWYL1).